The primary structure comprises 329 residues: Glycerol-3-phosphate dehydrogenase [NAD(P)+] (329 aa).

Positions 10, 11, 31, and 105 each coordinate NADPH. Sn-glycerol 3-phosphate-binding residues include K105, G134, and S136. A138 is a binding site for NADPH. K189, D242, S252, R253, and N254 together coordinate sn-glycerol 3-phosphate. Catalysis depends on K189, which acts as the Proton acceptor. An NADPH-binding site is contributed by R253. NADPH is bound by residues V277 and E279.

It belongs to the NAD-dependent glycerol-3-phosphate dehydrogenase family.

Its subcellular location is the cytoplasm. It carries out the reaction sn-glycerol 3-phosphate + NAD(+) = dihydroxyacetone phosphate + NADH + H(+). The enzyme catalyses sn-glycerol 3-phosphate + NADP(+) = dihydroxyacetone phosphate + NADPH + H(+). It functions in the pathway membrane lipid metabolism; glycerophospholipid metabolism. Its function is as follows. Catalyzes the reduction of the glycolytic intermediate dihydroxyacetone phosphate (DHAP) to sn-glycerol 3-phosphate (G3P), the key precursor for phospholipid synthesis. The chain is Glycerol-3-phosphate dehydrogenase [NAD(P)+] from Neisseria gonorrhoeae (strain ATCC 700825 / FA 1090).